The sequence spans 1235 residues: Receptor-type adenylate cyclase ESAG 4 (1235 aa).

The interval 1–20 is disordered; the sequence is MNMLHLSDRNASLAPSGGEH. Residues 1–32 are Cytoplasmic-facing; sequence MNMLHLSDRNASLAPSGGEHSLPTGGAVCRDA. A helical membrane pass occupies residues 33 to 53; that stretch reads MDILPVILRAPVALLLLLVVL. At 54–858 the chain is on the extracellular side; the sequence is PQLSVGAEAN…SNAGRISGAS (805 aa). Asn-63, Asn-90, Asn-97, Asn-362, Asn-531, Asn-566, Asn-705, and Asn-830 each carry an N-linked (GlcNAc...) asparagine glycan. Residues 859–879 form a helical membrane-spanning segment; sequence LVGIIIGGALALFLVVALGVV. The Cytoplasmic segment spans residues 880–1235; sequence PYFFLRNTVI…VSSQVEERLL (356 aa). Positions 900–1054 constitute a Guanylate cyclase domain; sequence TLIFTDIESS…RTSNMAARTE (155 aa). 2 residues coordinate Mg(2+): Asp-905 and Asp-948.

Belongs to the adenylyl cyclase class-3 family. Mg(2+) serves as cofactor.

It localises to the membrane. The catalysed reaction is ATP = 3',5'-cyclic AMP + diphosphate. Functionally, could act as a receptor for an unknown ligand. The chain is Receptor-type adenylate cyclase ESAG 4 (ESAG4) from Trypanosoma brucei brucei.